We begin with the raw amino-acid sequence, 1439 residues long: Fanconi anemia group A protein homolog (1439 aa).

The disordered stretch occupies residues 1 to 20; sequence MPGSPARGAAMGGGPRGLRK. Residues 19-35 carry the Nuclear localization signal motif; the sequence is RKTWTELLAGRVKKQKY.

As to quaternary structure, belongs to the multisubunit FA complex composed of FANCA, FANCB, FANCC, FANCE, FANCF, FANCG, FANCL/PHF9 and FANCM. In complex with FANCF, FANCG and FANCL, but not with FANCC, nor FANCE, interacts with HES1; this interaction may be essential for the stability and nuclear localization of FA core complex proteins. The complex with FANCC and FANCG may also include EIF2AK2 and HSP70. Interacts with FAAP20; interaction is direct. In terms of processing, phosphorylated primarily on serine residues. Phosphorylation is required for the formation of the nuclear complex. Mainly expressed in testis and lymphoid tissues like thymus, lymph nodes, and spleen, and at lower levels in kidney and ovary.

The protein resides in the nucleus. It localises to the cytoplasm. In terms of biological role, DNA repair protein that may operate in a postreplication repair or a cell cycle checkpoint function. May be involved in interstrand DNA cross-link repair and in the maintenance of normal chromosome stability. The polypeptide is Fanconi anemia group A protein homolog (Fanca) (Mus musculus (Mouse)).